A 608-amino-acid polypeptide reads, in one-letter code: Phosphogluconate dehydratase (608 aa).

Cys-154 and Cys-221 together coordinate [4Fe-4S] cluster.

Belongs to the IlvD/Edd family. Requires [4Fe-4S] cluster as cofactor.

The enzyme catalyses 6-phospho-D-gluconate = 2-dehydro-3-deoxy-6-phospho-D-gluconate + H2O. Its pathway is carbohydrate metabolism; Entner-Doudoroff pathway. In terms of biological role, catalyzes the dehydration of 6-phospho-D-gluconate to 2-dehydro-3-deoxy-6-phospho-D-gluconate. This chain is Phosphogluconate dehydratase, found in Helicobacter pylori (strain ATCC 700392 / 26695) (Campylobacter pylori).